We begin with the raw amino-acid sequence, 597 residues long: Aspartate--tRNA(Asp/Asn) ligase (597 aa).

Residue E175 participates in L-aspartate binding. The segment at 199 to 202 is aspartate; sequence QQYK. L-aspartate contacts are provided by R221 and H456. An ATP-binding site is contributed by 221–223; it reads RDE. E490 contributes to the ATP binding site. Position 497 (R497) interacts with L-aspartate. ATP is bound at residue 542–545; the sequence is GVDR.

The protein belongs to the class-II aminoacyl-tRNA synthetase family. Type 1 subfamily. As to quaternary structure, homodimer.

Its subcellular location is the cytoplasm. It catalyses the reaction tRNA(Asx) + L-aspartate + ATP = L-aspartyl-tRNA(Asx) + AMP + diphosphate. Its function is as follows. Aspartyl-tRNA synthetase with relaxed tRNA specificity since it is able to aspartylate not only its cognate tRNA(Asp) but also tRNA(Asn). Reaction proceeds in two steps: L-aspartate is first activated by ATP to form Asp-AMP and then transferred to the acceptor end of tRNA(Asp/Asn). In Beijerinckia indica subsp. indica (strain ATCC 9039 / DSM 1715 / NCIMB 8712), this protein is Aspartate--tRNA(Asp/Asn) ligase.